The sequence spans 494 residues: BUB3-interacting and GLEBS motif-containing protein ZNF207 (494 aa).

The tract at residues 1–92 (MGRKKKKQLK…EGIPEKDMDE (92 aa)) is microtubule-binding region. C2H2-type zinc fingers lie at residues 11–34 (PWCW…KAKH) and 35–58 (FKCH…MQVH). Residues 100–111 (KTQESQKKKQQD) show a composition bias toward basic and acidic residues. Disordered regions lie at residues 100–161 (KTQE…PGIP), 250–377 (NRPP…SATS), and 455–494 (LPGA…GGRY). Residues 112-121 (DSDEYDDDDS) show a composition bias toward acidic residues. The segment covering 127–136 (FQPQPVQPQQ) has biased composition (polar residues). Over residues 142-161 (MAQPGLPPVPGAPGMPPGIP) the composition is skewed to pro residues. A compositionally biased stretch (low complexity) spans 283–300 (SSSTASSNSESLSASSKA). Over residues 323–332 (LNSTPATSTE) the composition is skewed to polar residues. Residues 342-377 (TQSTASTTSTTNSTAAKPAASITSKPATLTTTSATS) show a composition bias toward low complexity. Residues 375–407 (ATSKLIHPDEDISLEERRAQLPKYQRNLPRPGQ) form a GLEBS region. Residues 463–483 (GQGPPMVPPYQGGPPRPPMGM) are compositionally biased toward pro residues.

In terms of assembly, interacts (via GLEBS region) with BUB3.

It localises to the nucleus. Its subcellular location is the chromosome. The protein resides in the centromere. It is found in the kinetochore. The protein localises to the cytoplasm. It localises to the cytoskeleton. Its subcellular location is the spindle. Functionally, kinetochore- and microtubule-binding protein that plays a key role in spindle assembly. ZNF207/BuGZ is mainly composed of disordered low-complexity regions and undergoes phase transition or coacervation to form temperature-dependent liquid droplets. Coacervation promotes microtubule bundling and concentrates tubulin, promoting microtubule polymerization and assembly of spindle and spindle matrix by concentrating its building blocks. Also acts as a regulator of mitotic chromosome alignment by mediating the stability and kinetochore loading of BUB3. Mechanisms by which BUB3 is protected are unclear: according to a first report, ZNF207/BuGZ may act by blocking ubiquitination and proteasomal degradation of BUB3. According to another report, the stabilization is independent of the proteasome. The polypeptide is BUB3-interacting and GLEBS motif-containing protein ZNF207 (Pongo abelii (Sumatran orangutan)).